Reading from the N-terminus, the 878-residue chain is Phosphoenolpyruvate carboxylase (878 aa).

Catalysis depends on residues His-137 and Lys-545.

Belongs to the PEPCase type 1 family. The cofactor is Mg(2+).

It catalyses the reaction oxaloacetate + phosphate = phosphoenolpyruvate + hydrogencarbonate. Functionally, forms oxaloacetate, a four-carbon dicarboxylic acid source for the tricarboxylic acid cycle. The chain is Phosphoenolpyruvate carboxylase from Proteus mirabilis (strain HI4320).